The chain runs to 325 residues: Small ribosomal subunit protein uS3 (325 aa).

One can recognise a KH type-2 domain in the interval 38–106; the sequence is IRKMMSKGME…QVQLNILEVK (69 aa). The segment at 217–325 is disordered; that stretch reads EALLRQQRRE…AQGAPEKAEG (109 aa). A compositionally biased stretch (basic residues) spans 222-232; sequence QQRRERPRRGP. Positions 285-316 are enriched in low complexity; it reads TESAAVEGTPVETPAVTPETTAAPAAVTTAEA.

The protein belongs to the universal ribosomal protein uS3 family. In terms of assembly, part of the 30S ribosomal subunit. Forms a tight complex with proteins S10 and S14.

In terms of biological role, binds the lower part of the 30S subunit head. Binds mRNA in the 70S ribosome, positioning it for translation. This is Small ribosomal subunit protein uS3 from Parafrankia sp. (strain EAN1pec).